A 200-amino-acid polypeptide reads, in one-letter code: NADH-quinone oxidoreductase chain 10 (200 aa).

A run of 5 helical transmembrane segments spans residues 2-22 (MTFAFYLFAISACVAGFMVVI), 26-46 (PVHSVLWLILAFLSAAGLFVL), 51-71 (FVAMLLVVVYVGAVAVLFLFV), 90-110 (LPLALVIGVVLLAQLGIAFSG), and 144-164 (VLMFQLAGLVLLVAMIGAIVL).

This sequence belongs to the complex I subunit 6 family. In terms of assembly, NDH-1 is composed of at least 14 different subunits, Nqo1 to Nqo14. The complex has a L-shaped structure, with the hydrophobic arm (subunits Nqo7, Nqo8, Nqo10 to Nqo14) embedded in the inner membrane and the hydrophilic peripheral arm (subunits Nqo1 to Nqo6, Nqo9) protruding into the bacterial cytoplasm. The hydrophilic domain contains all the redox centers.

The protein resides in the cell inner membrane. The catalysed reaction is a quinone + NADH + 5 H(+)(in) = a quinol + NAD(+) + 4 H(+)(out). Its function is as follows. NDH-1 shuttles electrons from NADH, via FMN and iron-sulfur (Fe-S) centers, to quinones in the respiratory chain. The immediate electron acceptor for the enzyme in this species is believed to be ubiquinone. Couples the redox reaction to proton translocation (for every two electrons transferred, four hydrogen ions are translocated across the cytoplasmic membrane), and thus conserves the redox energy in a proton gradient. The sequence is that of NADH-quinone oxidoreductase chain 10 from Paracoccus denitrificans.